Consider the following 268-residue polypeptide: Peptide transport system ATP-binding protein SapF (268 aa).

The 246-residue stretch at 6-251 (LEVRNLSKTF…PLHELTRRLI (246 aa)) folds into the ABC transporter domain. 47–54 (GENGSGKS) is an ATP binding site.

Belongs to the ABC transporter superfamily.

Its subcellular location is the cell inner membrane. Functionally, involved in a peptide intake transport system that plays a role in the resistance to antimicrobial peptides. In Salmonella typhimurium (strain LT2 / SGSC1412 / ATCC 700720), this protein is Peptide transport system ATP-binding protein SapF.